The chain runs to 695 residues: Testis-specific Y-encoded-like protein 2 (695 aa).

The interval 1–56 (MDRPDEGPPAKTRRLSSSESPQRDPPPPPPPPPLLRLPLPPPQQRPRLQEETEAAQ) is disordered. Residue Lys-11 forms a Glycyl lysine isopeptide (Lys-Gly) (interchain with G-Cter in SUMO2) linkage. Ser-18 and Ser-20 each carry phosphoserine. The span at 23–44 (RDPPPPPPPPPLLRLPLPPPQQ) shows a compositional bias: pro residues. Glycyl lysine isopeptide (Lys-Gly) (interchain with G-Cter in SUMO2) cross-links involve residues Lys-163 and Lys-165. A disordered region spans residues 175 to 207 (EDEDEQESMRSSRRRRRRRRRKQRKVKRESRQR). The segment covering 185–202 (SSRRRRRRRRRKQRKVKR) has biased composition (basic residues). A Phosphothreonine modification is found at Thr-340. Disordered stretches follow at residues 471–603 (DINE…RDIE) and 632–695 (VEEE…GKTG). Residues 481–491 (SPDHDEVRNET) are compositionally biased toward basic and acidic residues. Positions 496–518 (ESADDNETTDNNESADDNNENPE) are enriched in acidic residues. The segment covering 519–535 (DNNKNADDNKENPDNNK) has biased composition (basic and acidic residues). Low complexity predominate over residues 539 to 557 (GNNFFNGGFWGSHGNNQDS). Composition is skewed to acidic residues over residues 558 to 601 (SDSD…DDRD) and 632 to 677 (VEEE…DLED). Phosphoserine occurs at positions 670 and 673.

This sequence belongs to the nucleosome assembly protein (NAP) family. Interacts with histones. Interacts with CASK. Part of a complex containing CASK, TBR1 and TSPYL2. Phosphorylation at Ser-20 and/or Thr-340 impairs function on cell proliferation. As to expression, ubiquitously expressed, with highest levels in testis, adrenal gland, cerebral cortex, ovary, skeletal muscle and spleen. Present in testis, adrenal gland, cerebral cortex and ovary (at protein level).

The protein resides in the nucleus. It localises to the cytoplasm. Functionally, part of the CASK/TBR1/TSPYL2 transcriptional complex which modulates gene expression in response to neuronal synaptic activity, probably by facilitating nucleosome assembly. May inhibit cell proliferation by inducing p53-dependent CDKN1A expression. The chain is Testis-specific Y-encoded-like protein 2 (TSPYL2) from Macaca fascicularis (Crab-eating macaque).